We begin with the raw amino-acid sequence, 150 residues long: Large ribosomal subunit protein uL15 (150 aa).

Residues 1–52 (MITLNTLKDSTRKRKPRKRVGRGIGSKHGKTCGRGEKGAGARSGYKRRLGKE) form a disordered region. Over residues 11–31 (TRKRKPRKRVGRGIGSKHGKT) the composition is skewed to basic residues.

This sequence belongs to the universal ribosomal protein uL15 family. Part of the 50S ribosomal subunit.

Binds to the 23S rRNA. In Protochlamydia amoebophila (strain UWE25), this protein is Large ribosomal subunit protein uL15.